The primary structure comprises 255 residues: Sec-independent protein translocase protein TatC (255 aa).

7 helical membrane passes run 28 to 48 (VAAV…IYAL), 56 to 76 (YLPE…LAPF), 80 to 100 (LMIS…GFIA), 121 to 141 (LFYA…FGFF), 165 to 185 (LFFA…LIWV), 195 to 212 (NSRP…MVLT), and 216 to 236 (VFSQ…GVFF).

This sequence belongs to the TatC family. In terms of assembly, the Tat system comprises two distinct complexes: a TatABC complex, containing multiple copies of TatA, TatB and TatC subunits, and a separate TatA complex, containing only TatA subunits. Substrates initially bind to the TatABC complex, which probably triggers association of the separate TatA complex to form the active translocon.

Its subcellular location is the cell membrane. Part of the twin-arginine translocation (Tat) system that transports large folded proteins containing a characteristic twin-arginine motif in their signal peptide across membranes. Together with TatB, TatC is part of a receptor directly interacting with Tat signal peptides. The sequence is that of Sec-independent protein translocase protein TatC from Azotobacter chroococcum mcd 1.